The chain runs to 369 residues: Ferredoxin--NADP reductase 2 (369 aa).

The disordered stretch occupies residues 1–23; sequence MDLSIPNPVADTTKQVDGGSPAG. FAD contacts are provided by aspartate 58, glutamine 66, tyrosine 71, valine 111, phenylalanine 146, aspartate 311, and threonine 352.

It belongs to the ferredoxin--NADP reductase type 2 family. Homodimer. The cofactor is FAD.

It carries out the reaction 2 reduced [2Fe-2S]-[ferredoxin] + NADP(+) + H(+) = 2 oxidized [2Fe-2S]-[ferredoxin] + NADPH. This chain is Ferredoxin--NADP reductase 2, found in Cupriavidus necator (strain ATCC 17699 / DSM 428 / KCTC 22496 / NCIMB 10442 / H16 / Stanier 337) (Ralstonia eutropha).